The primary structure comprises 305 residues: tRNA pseudouridine synthase B (305 aa).

The Nucleophile role is filled by Asp39.

The protein belongs to the pseudouridine synthase TruB family. Type 1 subfamily.

The catalysed reaction is uridine(55) in tRNA = pseudouridine(55) in tRNA. Responsible for synthesis of pseudouridine from uracil-55 in the psi GC loop of transfer RNAs. In Staphylococcus aureus (strain MW2), this protein is tRNA pseudouridine synthase B.